The chain runs to 329 residues: GMP reductase (329 aa).

Cysteine 178 acts as the Thioimidate intermediate in catalysis. Residue 207 to 230 (IIADGGIRNNGDIAKSIRFGATMC) participates in NADP(+) binding.

The protein belongs to the IMPDH/GMPR family. GuaC type 2 subfamily.

The catalysed reaction is IMP + NH4(+) + NADP(+) = GMP + NADPH + 2 H(+). Its function is as follows. Catalyzes the irreversible NADPH-dependent deamination of GMP to IMP. It functions in the conversion of nucleobase, nucleoside and nucleotide derivatives of G to A nucleotides, and in maintaining the intracellular balance of A and G nucleotides. The protein is GMP reductase of Lacticaseibacillus paracasei (strain ATCC 334 / BCRC 17002 / CCUG 31169 / CIP 107868 / KCTC 3260 / NRRL B-441) (Lactobacillus paracasei).